The following is a 165-amino-acid chain: REP-associated tyrosine transposase (165 aa).

Belongs to the transposase 17 family. RAYT subfamily. In terms of assembly, monomer.

Cleavage occurs in the presence of magnesium, but is much more pronounced with manganese. Its function is as follows. Transposase that is always flanked by repeated extragenic palindrome (REP) sequences, which are clustered in structures called bacterial interspersed mosaic elements (BIMEs). RayT catalyzes cleavage and recombination of BIMEs. Binds REP sequences and cleaves BIMEs both upstream and downstream of the REP sequence. Could be important in the creation of BIME variability and amplification. This is REP-associated tyrosine transposase from Escherichia coli (strain K12).